The sequence spans 555 residues: 2-succinyl-5-enolpyruvyl-6-hydroxy-3-cyclohexene-1-carboxylate synthase (555 aa).

The protein belongs to the TPP enzyme family. MenD subfamily. In terms of assembly, homodimer. Requires Mg(2+) as cofactor. Mn(2+) serves as cofactor. Thiamine diphosphate is required as a cofactor.

The enzyme catalyses isochorismate + 2-oxoglutarate + H(+) = 5-enolpyruvoyl-6-hydroxy-2-succinyl-cyclohex-3-ene-1-carboxylate + CO2. The protein operates within quinol/quinone metabolism; 1,4-dihydroxy-2-naphthoate biosynthesis; 1,4-dihydroxy-2-naphthoate from chorismate: step 2/7. It participates in quinol/quinone metabolism; menaquinone biosynthesis. In terms of biological role, catalyzes the thiamine diphosphate-dependent decarboxylation of 2-oxoglutarate and the subsequent addition of the resulting succinic semialdehyde-thiamine pyrophosphate anion to isochorismate to yield 2-succinyl-5-enolpyruvyl-6-hydroxy-3-cyclohexene-1-carboxylate (SEPHCHC). The sequence is that of 2-succinyl-5-enolpyruvyl-6-hydroxy-3-cyclohexene-1-carboxylate synthase from Cronobacter sakazakii (strain ATCC BAA-894) (Enterobacter sakazakii).